Consider the following 250-residue polypeptide: UPF0246 protein cce_3295 (250 aa).

It belongs to the UPF0246 family.

This is UPF0246 protein cce_3295 from Crocosphaera subtropica (strain ATCC 51142 / BH68) (Cyanothece sp. (strain ATCC 51142)).